We begin with the raw amino-acid sequence, 251 residues long: Ubiquinone/menaquinone biosynthesis C-methyltransferase UbiE (251 aa).

S-adenosyl-L-methionine contacts are provided by residues Thr-74, Asp-95, and 123-124; that span reads NA.

Belongs to the class I-like SAM-binding methyltransferase superfamily. MenG/UbiE family.

It catalyses the reaction a 2-demethylmenaquinol + S-adenosyl-L-methionine = a menaquinol + S-adenosyl-L-homocysteine + H(+). It carries out the reaction a 2-methoxy-6-(all-trans-polyprenyl)benzene-1,4-diol + S-adenosyl-L-methionine = a 5-methoxy-2-methyl-3-(all-trans-polyprenyl)benzene-1,4-diol + S-adenosyl-L-homocysteine + H(+). Its pathway is quinol/quinone metabolism; menaquinone biosynthesis; menaquinol from 1,4-dihydroxy-2-naphthoate: step 2/2. It participates in cofactor biosynthesis; ubiquinone biosynthesis. Functionally, methyltransferase required for the conversion of demethylmenaquinol (DMKH2) to menaquinol (MKH2) and the conversion of 2-polyprenyl-6-methoxy-1,4-benzoquinol (DDMQH2) to 2-polyprenyl-3-methyl-6-methoxy-1,4-benzoquinol (DMQH2). This is Ubiquinone/menaquinone biosynthesis C-methyltransferase UbiE from Shewanella oneidensis (strain ATCC 700550 / JCM 31522 / CIP 106686 / LMG 19005 / NCIMB 14063 / MR-1).